The following is a 349-amino-acid chain: Small ribosomal subunit protein uS2 (349 aa).

The tract at residues 302–334 is disordered; that stretch reads QNNYDPSKRGYNPKYVNHKSTFNKFNNKKPVDS.

Belongs to the universal ribosomal protein uS2 family.

The polypeptide is Small ribosomal subunit protein uS2 (Ureaplasma parvum serovar 3 (strain ATCC 27815 / 27 / NCTC 11736)).